Consider the following 354-residue polypeptide: Photosystem II protein D1 (354 aa).

An N-acetylthreonine modification is found at Thr-2. At Thr-2 the chain carries Phosphothreonine. A run of 3 helical transmembrane segments spans residues 29–46 (YIGW…TATS), 118–133 (HFLL…EWEL), and 142–156 (WIAV…AATA). Position 118 (His-118) interacts with chlorophyll a. Tyr-126 serves as a coordination point for pheophytin a. [CaMn4O5] cluster contacts are provided by Asp-170 and Glu-189. Residues 197 to 218 (FHMLGVAGVFGGSLFSAMHGSL) traverse the membrane as a helical segment. His-198 lines the chlorophyll a pocket. A quinone-binding positions include His-215 and 264-265 (SF). His-215 is a binding site for Fe cation. His-272 serves as a coordination point for Fe cation. Residues 274–288 (FLAAWPVVGIWFTAL) form a helical membrane-spanning segment. His-332, Glu-333, Asp-342, and Ala-344 together coordinate [CaMn4O5] cluster. The propeptide occupies 345 to 354 (ASIEAPSLNG).

This sequence belongs to the reaction center PufL/M/PsbA/D family. As to quaternary structure, PSII is composed of 1 copy each of membrane proteins PsbA, PsbB, PsbC, PsbD, PsbE, PsbF, PsbH, PsbI, PsbJ, PsbK, PsbL, PsbM, PsbT, PsbX, PsbY, PsbZ, Psb30/Ycf12, at least 3 peripheral proteins of the oxygen-evolving complex and a large number of cofactors. It forms dimeric complexes. It depends on The D1/D2 heterodimer binds P680, chlorophylls that are the primary electron donor of PSII, and subsequent electron acceptors. It shares a non-heme iron and each subunit binds pheophytin, quinone, additional chlorophylls, carotenoids and lipids. D1 provides most of the ligands for the Mn4-Ca-O5 cluster of the oxygen-evolving complex (OEC). There is also a Cl(-1) ion associated with D1 and D2, which is required for oxygen evolution. The PSII complex binds additional chlorophylls, carotenoids and specific lipids. as a cofactor. Tyr-161 forms a radical intermediate that is referred to as redox-active TyrZ, YZ or Y-Z. In terms of processing, C-terminally processed by CTPA; processing is essential to allow assembly of the oxygen-evolving complex and thus photosynthetic growth.

It localises to the plastid. The protein localises to the chloroplast thylakoid membrane. It carries out the reaction 2 a plastoquinone + 4 hnu + 2 H2O = 2 a plastoquinol + O2. Photosystem II (PSII) is a light-driven water:plastoquinone oxidoreductase that uses light energy to abstract electrons from H(2)O, generating O(2) and a proton gradient subsequently used for ATP formation. It consists of a core antenna complex that captures photons, and an electron transfer chain that converts photonic excitation into a charge separation. The D1/D2 (PsbA/PsbD) reaction center heterodimer binds P680, the primary electron donor of PSII as well as several subsequent electron acceptors. The chain is Photosystem II protein D1 from Selaginella uncinata (Blue spike-moss).